The primary structure comprises 802 residues: DNA mismatch repair protein MutS (802 aa).

ATP is bound at residue 617–624; the sequence is GPNMGGKS.

Belongs to the DNA mismatch repair MutS family.

This protein is involved in the repair of mismatches in DNA. It is possible that it carries out the mismatch recognition step. This protein has a weak ATPase activity. This chain is DNA mismatch repair protein MutS, found in Buchnera aphidicola subsp. Acyrthosiphon pisum (strain Tuc7).